The chain runs to 231 residues: Probable pseudouridine-5'-phosphatase (231 aa).

Aspartate 15 (nucleophile) is an active-site residue. Mg(2+)-binding residues include aspartate 15 and aspartate 17. Aspartate 17 (proton donor) is an active-site residue.

This sequence belongs to the HAD-like hydrolase superfamily. CbbY/CbbZ/Gph/YieH family. Mg(2+) is required as a cofactor.

The enzyme catalyses psi-UMP + H2O = pseudouridine + phosphate. Its function is as follows. Dephosphorylates pseudouridine 5'-phosphate, a potential intermediate in rRNA degradation. This chain is Probable pseudouridine-5'-phosphatase (Gs1l), found in Drosophila melanogaster (Fruit fly).